The following is a 434-amino-acid chain: Glutamate-1-semialdehyde 2,1-aminomutase (434 aa).

K273 is subject to N6-(pyridoxal phosphate)lysine.

Belongs to the class-III pyridoxal-phosphate-dependent aminotransferase family. HemL subfamily. Homodimer. It depends on pyridoxal 5'-phosphate as a cofactor.

The protein resides in the cytoplasm. It carries out the reaction (S)-4-amino-5-oxopentanoate = 5-aminolevulinate. It functions in the pathway porphyrin-containing compound metabolism; protoporphyrin-IX biosynthesis; 5-aminolevulinate from L-glutamyl-tRNA(Glu): step 2/2. The sequence is that of Glutamate-1-semialdehyde 2,1-aminomutase from Polynucleobacter asymbioticus (strain DSM 18221 / CIP 109841 / QLW-P1DMWA-1) (Polynucleobacter necessarius subsp. asymbioticus).